A 202-amino-acid polypeptide reads, in one-letter code: FMN-dependent NADH:quinone oxidoreductase (202 aa).

Residues Ser-9, 15–17 (SVS), 95–98 (MYNF), and 139–142 (SRGG) each bind FMN.

Belongs to the azoreductase type 1 family. In terms of assembly, homodimer. The cofactor is FMN.

It carries out the reaction 2 a quinone + NADH + H(+) = 2 a 1,4-benzosemiquinone + NAD(+). It catalyses the reaction N,N-dimethyl-1,4-phenylenediamine + anthranilate + 2 NAD(+) = 2-(4-dimethylaminophenyl)diazenylbenzoate + 2 NADH + 2 H(+). Its function is as follows. Quinone reductase that provides resistance to thiol-specific stress caused by electrophilic quinones. Also exhibits azoreductase activity. Catalyzes the reductive cleavage of the azo bond in aromatic azo compounds to the corresponding amines. This chain is FMN-dependent NADH:quinone oxidoreductase, found in Laribacter hongkongensis (strain HLHK9).